We begin with the raw amino-acid sequence, 166 residues long: MSKVMETKQQVVTEIADKLRASKSTIVVDYRGLTVSEATELRKQLREAGVEFKVYKNSLTRRAAESAEMAELNEFLTGPNAIAFSNEDVVAPAKVLNDFAKDHEALEIKAGVIEGKLVTLDEVKAIATLPSREGLLSMLLSVLQAPIRNLALATKAVADQKEEQGA.

Belongs to the universal ribosomal protein uL10 family. In terms of assembly, part of the ribosomal stalk of the 50S ribosomal subunit. The N-terminus interacts with L11 and the large rRNA to form the base of the stalk. The C-terminus forms an elongated spine to which L12 dimers bind in a sequential fashion forming a multimeric L10(L12)X complex.

Its function is as follows. Forms part of the ribosomal stalk, playing a central role in the interaction of the ribosome with GTP-bound translation factors. This is Large ribosomal subunit protein uL10 from Bacillus cereus (strain ATCC 14579 / DSM 31 / CCUG 7414 / JCM 2152 / NBRC 15305 / NCIMB 9373 / NCTC 2599 / NRRL B-3711).